A 482-amino-acid polypeptide reads, in one-letter code: Adenylyltransferase and sulfurtransferase uba4 (482 aa).

ATP is bound by residues Gly93, Asp114, 121–125, Lys138, and 182–183; these read SNLHR and DN. Cys231 and Cys234 together coordinate Zn(2+). Cys248 acts as the Glycyl thioester intermediate; for adenylyltransferase activity in catalysis. Residues Cys309 and Cys312 each contribute to the Zn(2+) site. Residues 362-480 enclose the Rhodanese domain; it reads EEKEPTIIDV…WKEQVDPEWP (119 aa). Cys435 functions as the Cysteine persulfide intermediate; for sulfurtransferase activity in the catalytic mechanism.

In the N-terminal section; belongs to the HesA/MoeB/ThiF family. UBA4 subfamily. Zn(2+) serves as cofactor.

The protein resides in the cytoplasm. It localises to the cytosol. It catalyses the reaction [molybdopterin-synthase sulfur-carrier protein]-C-terminal Gly-Gly + ATP + H(+) = [molybdopterin-synthase sulfur-carrier protein]-C-terminal Gly-Gly-AMP + diphosphate. The catalysed reaction is [molybdopterin-synthase sulfur-carrier protein]-C-terminal Gly-Gly-AMP + S-sulfanyl-L-cysteinyl-[cysteine desulfurase] + AH2 = [molybdopterin-synthase sulfur-carrier protein]-C-terminal-Gly-aminoethanethioate + L-cysteinyl-[cysteine desulfurase] + A + AMP + 2 H(+). It participates in tRNA modification; 5-methoxycarbonylmethyl-2-thiouridine-tRNA biosynthesis. It functions in the pathway cofactor biosynthesis; molybdopterin biosynthesis. In terms of biological role, plays a central role in 2-thiolation of mcm(5)S(2)U at tRNA wobble positions of cytosolic tRNA(Lys), tRNA(Glu) and tRNA(Gln). Also essential during biosynthesis of the molybdenum cofactor. Acts by mediating the C-terminal thiocarboxylation of sulfur carriers urm1 and mocs2a. Its N-terminus first activates urm1 and mocs2a as acyl-adenylates (-COAMP), then the persulfide sulfur on the catalytic cysteine is transferred to urm1 and mocs2a to form thiocarboxylation (-COSH) of their C-terminus. The reaction probably involves hydrogen sulfide that is generated from the persulfide intermediate and that acts as a nucleophile towards urm1 and mocs2a. Subsequently, a transient disulfide bond is formed. Does not use thiosulfate as sulfur donor; nfs1 probably acting as a sulfur donor for thiocarboxylation reactions. This Aspergillus niger (strain ATCC MYA-4892 / CBS 513.88 / FGSC A1513) protein is Adenylyltransferase and sulfurtransferase uba4.